The sequence spans 641 residues: Bifunctional protein glk (641 aa).

The segment at methionine 1–leucine 21 is disordered. The tract at residues methionine 1 to serine 340 is glucokinase. Residue alanine 23–threonine 28 coordinates ATP. Positions serine 341–threonine 417 constitute an HTH rpiR-type domain. The segment at serine 341–glutamate 641 is putative HTH-type transcriptional regulator. The H-T-H motif DNA-binding region spans isoleucine 377–arginine 396. The region spanning alanine 461–serine 600 is the SIS domain. The chain crosses the membrane as a helical span at residues serine 576–isoleucine 596.

In the N-terminal section; belongs to the bacterial glucokinase family.

The protein resides in the membrane. The catalysed reaction is D-glucose + ATP = D-glucose 6-phosphate + ADP + H(+). In Burkholderia thailandensis (strain ATCC 700388 / DSM 13276 / CCUG 48851 / CIP 106301 / E264), this protein is Bifunctional protein glk (glk).